A 217-amino-acid polypeptide reads, in one-letter code: Large ribosomal subunit protein uL1 (217 aa).

Belongs to the universal ribosomal protein uL1 family. Part of the 50S ribosomal subunit.

Functionally, binds directly to 23S rRNA. The L1 stalk is quite mobile in the ribosome, and is involved in E site tRNA release. Its function is as follows. Protein L1 is also a translational repressor protein, it controls the translation of the L11 operon by binding to its mRNA. The polypeptide is Large ribosomal subunit protein uL1 (Wolbachia pipientis wMel).